A 496-amino-acid polypeptide reads, in one-letter code: Acyltransferase clz6 (496 aa).

Residue His163 is the Proton acceptor of the active site.

This sequence belongs to the plant acyltransferase family. As to quaternary structure, monomer.

Its pathway is secondary metabolite biosynthesis. Its function is as follows. Acyltransferase; part of the gene cluster that mediates the biosynthesis of squalestatin S1 (SQS1, also known as zaragozic acid A), a heavily oxidized fungal polyketide that offers potent cholesterol lowering activity by targeting squalene synthase (SS). SQS1 is composed of a 2,8-dioxobicyclic[3.2.1]octane-3,4,5-tricarboxyclic acid core that is connected to two lipophilic polyketide arms. These initial steps feature the priming of an unusual benzoic acid starter unit onto the highly reducing polyketide synthase clz14, followed by oxaloacetate extension and product release to generate a tricarboxylic acid containing product. The phenylalanine ammonia lyase (PAL) clz10 and the acyl-CoA ligase clz12 are involved in transforming phenylalanine into benzoyl-CoA. The citrate synthase-like protein clz17 is involved in connecting the C-alpha-carbons of the hexaketide chain and oxaloacetate to afford the tricarboxylic acid unit. The potential hydrolytic enzymes, clz11 and clz13, are in close proximity to pks2 and may participate in product release. On the other side, the tetraketide arm is synthesized by a the squalestatin tetraketide synthase clz2 and enzymatically esterified to the core in the last biosynthetic step, by the acetyltransferase clz6. The biosynthesis of the tetraketide must involve 3 rounds of chain extension. After the first and second rounds methyl-transfer occurs, and in all rounds of extension the ketoreductase and dehydratase are active. The enoyl reductase and C-MeT of clz2 are not active in the final round of extension. The acetyltransferase clz6 appears to have a broad substrate selectivity for its acyl CoA substrate, allowing the in vitro synthesis of novel squalestatins. The biosynthesis of SQS1 requires several oxidative steps likely performed by oxidoreductases clz3, clz15 and clz16. Finally, in support of the identification of the cluster as being responsible for SQS1 production, the cluster contains a gene encoding a putative squalene synthase (SS) clz20, suggesting a likely mechanism for self-resistance. This chain is Acyltransferase clz6, found in Cochliobolus lunatus (Filamentous fungus).